Here is a 233-residue protein sequence, read N- to C-terminus: Ribose-5-phosphate isomerase A (233 aa).

Residues S28–T31, D83–D86, and K96–G99 contribute to the substrate site. E105 serves as the catalytic Proton acceptor. Residue K123 coordinates substrate.

Belongs to the ribose 5-phosphate isomerase family. Homodimer.

The catalysed reaction is aldehydo-D-ribose 5-phosphate = D-ribulose 5-phosphate. The protein operates within carbohydrate degradation; pentose phosphate pathway; D-ribose 5-phosphate from D-ribulose 5-phosphate (non-oxidative stage): step 1/1. Functionally, catalyzes the reversible conversion of ribose-5-phosphate to ribulose 5-phosphate. The protein is Ribose-5-phosphate isomerase A of Maricaulis maris (strain MCS10) (Caulobacter maris).